Reading from the N-terminus, the 128-residue chain is Probable 4-amino-4-deoxy-L-arabinose-phosphoundecaprenol flippase subunit ArnF (128 aa).

A helical transmembrane segment spans residues 1–21 (MGLMWGLFSVIIASAAQLSLG). The Periplasmic segment spans residues 22–35 (YAASHLPPMTQFWD). Residues 36–56 (FIAAFFAFGPGARMLVVGLVG) form a helical membrane-spanning segment. The Cytoplasmic portion of the chain corresponds to 57 to 76 (YLLSVFCWYKALHQLALSKA). A helical membrane pass occupies residues 77-97 (YALLSMSYVLVWIASMVLPGW). Over 98–100 (EGT) the chain is Periplasmic. The chain crosses the membrane as a helical span at residues 101–121 (FSLKALLGVACIMSGLMLIFL). The Cytoplasmic portion of the chain corresponds to 122–128 (PTTKQRY).

It belongs to the ArnF family. In terms of assembly, heterodimer of ArnE and ArnF.

Its subcellular location is the cell inner membrane. It participates in bacterial outer membrane biogenesis; lipopolysaccharide biosynthesis. Its function is as follows. Translocates 4-amino-4-deoxy-L-arabinose-phosphoundecaprenol (alpha-L-Ara4N-phosphoundecaprenol) from the cytoplasmic to the periplasmic side of the inner membrane. The sequence is that of Probable 4-amino-4-deoxy-L-arabinose-phosphoundecaprenol flippase subunit ArnF from Escherichia fergusonii (strain ATCC 35469 / DSM 13698 / CCUG 18766 / IAM 14443 / JCM 21226 / LMG 7866 / NBRC 102419 / NCTC 12128 / CDC 0568-73).